We begin with the raw amino-acid sequence, 411 residues long: Protein CNPPD1 (411 aa).

Residues 231–253 (LSCLLAMAYVSSVALAVASMAVI) traverse the membrane as a helical segment.

Belongs to the CNPPD1 family.

Its subcellular location is the membrane. The chain is Protein CNPPD1 (CNPPD1) from Bos taurus (Bovine).